We begin with the raw amino-acid sequence, 351 residues long: Translation initiation factor eIF2B subunit beta (351 aa).

The protein belongs to the eIF-2B alpha/beta/delta subunits family. As to quaternary structure, component of the translation initiation factor 2B (eIF2B) complex which is a heterodecamer of two sets of five different subunits: alpha, beta, gamma, delta and epsilon. Subunits alpha, beta and delta comprise a regulatory subcomplex and subunits epsilon and gamma comprise a catalytic subcomplex. Within the complex, the hexameric regulatory complex resides at the center, with the two heterodimeric catalytic subcomplexes bound on opposite sides.

The protein localises to the cytoplasm. Its subcellular location is the cytosol. With respect to regulation, activated by the chemical integrated stress response (ISR) inhibitor ISRIB which stimulates guanine nucleotide exchange factor activity for both phosphorylated and unphosphorylated eIF2. In terms of biological role, acts as a component of the translation initiation factor 2B (eIF2B) complex, which catalyzes the exchange of GDP for GTP on eukaryotic initiation factor 2 (eIF2) gamma subunit. Its guanine nucleotide exchange factor activity is repressed when bound to eIF2 complex phosphorylated on the alpha subunit, thereby limiting the amount of methionyl-initiator methionine tRNA available to the ribosome and consequently global translation is repressed. The polypeptide is Translation initiation factor eIF2B subunit beta (Eif2b2) (Mus musculus (Mouse)).